Reading from the N-terminus, the 705-residue chain is Elongation factor G (705 aa).

The tr-type G domain occupies 8-291 (EKVRNIGIMA…AVVEYLPSPI (284 aa)). GTP contacts are provided by residues 17 to 24 (AHIDAGKT), 90 to 94 (DTPGH), and 144 to 147 (NKMD).

This sequence belongs to the TRAFAC class translation factor GTPase superfamily. Classic translation factor GTPase family. EF-G/EF-2 subfamily.

Its subcellular location is the cytoplasm. In terms of biological role, catalyzes the GTP-dependent ribosomal translocation step during translation elongation. During this step, the ribosome changes from the pre-translocational (PRE) to the post-translocational (POST) state as the newly formed A-site-bound peptidyl-tRNA and P-site-bound deacylated tRNA move to the P and E sites, respectively. Catalyzes the coordinated movement of the two tRNA molecules, the mRNA and conformational changes in the ribosome. The sequence is that of Elongation factor G from Chloroherpeton thalassium (strain ATCC 35110 / GB-78).